We begin with the raw amino-acid sequence, 382 residues long: Succinyl-diaminopimelate desuccinylase (382 aa).

Residue histidine 71 coordinates Zn(2+). The active site involves aspartate 73. Aspartate 105 contacts Zn(2+). Catalysis depends on glutamate 139, which acts as the Proton acceptor. Residues glutamate 140, glutamate 168, and histidine 354 each contribute to the Zn(2+) site.

It belongs to the peptidase M20A family. DapE subfamily. In terms of assembly, homodimer. Requires Zn(2+) as cofactor. The cofactor is Co(2+).

The enzyme catalyses N-succinyl-(2S,6S)-2,6-diaminopimelate + H2O = (2S,6S)-2,6-diaminopimelate + succinate. Its pathway is amino-acid biosynthesis; L-lysine biosynthesis via DAP pathway; LL-2,6-diaminopimelate from (S)-tetrahydrodipicolinate (succinylase route): step 3/3. In terms of biological role, catalyzes the hydrolysis of N-succinyl-L,L-diaminopimelic acid (SDAP), forming succinate and LL-2,6-diaminopimelate (DAP), an intermediate involved in the bacterial biosynthesis of lysine and meso-diaminopimelic acid, an essential component of bacterial cell walls. This is Succinyl-diaminopimelate desuccinylase from Stutzerimonas stutzeri (strain A1501) (Pseudomonas stutzeri).